The following is a 155-amino-acid chain: Endoribonuclease YbeY (155 aa).

Positions 113, 117, and 123 each coordinate Zn(2+).

The protein belongs to the endoribonuclease YbeY family. The cofactor is Zn(2+).

It localises to the cytoplasm. Single strand-specific metallo-endoribonuclease involved in late-stage 70S ribosome quality control and in maturation of the 3' terminus of the 16S rRNA. The polypeptide is Endoribonuclease YbeY (Ureaplasma parvum serovar 3 (strain ATCC 27815 / 27 / NCTC 11736)).